The primary structure comprises 42 residues: Large ribosomal subunit protein bL36 (42 aa).

Belongs to the bacterial ribosomal protein bL36 family.

This Anaplasma marginale (strain St. Maries) protein is Large ribosomal subunit protein bL36.